The sequence spans 487 residues: Acetyl-coenzyme A carboxylase carboxyl transferase subunit beta, chloroplastic (487 aa).

In terms of domain architecture, CoA carboxyltransferase N-terminal spans 223-487; sequence LWIQCDNCYG…FCPLNKTEIK (265 aa). 4 residues coordinate Zn(2+): cysteine 227, cysteine 230, cysteine 243, and cysteine 246. Residues 227-246 form a C4-type zinc finger; sequence CDNCYGLMYKKVKMNVCEQC.

It belongs to the AccD/PCCB family. As to quaternary structure, acetyl-CoA carboxylase is a heterohexamer composed of biotin carboxyl carrier protein, biotin carboxylase and 2 subunits each of ACCase subunit alpha and ACCase plastid-coded subunit beta (accD). Zn(2+) is required as a cofactor.

The protein resides in the plastid. It is found in the chloroplast stroma. It carries out the reaction N(6)-carboxybiotinyl-L-lysyl-[protein] + acetyl-CoA = N(6)-biotinyl-L-lysyl-[protein] + malonyl-CoA. Its pathway is lipid metabolism; malonyl-CoA biosynthesis; malonyl-CoA from acetyl-CoA: step 1/1. Its function is as follows. Component of the acetyl coenzyme A carboxylase (ACC) complex. Biotin carboxylase (BC) catalyzes the carboxylation of biotin on its carrier protein (BCCP) and then the CO(2) group is transferred by the transcarboxylase to acetyl-CoA to form malonyl-CoA. This Nasturtium officinale (Watercress) protein is Acetyl-coenzyme A carboxylase carboxyl transferase subunit beta, chloroplastic.